The following is a 785-amino-acid chain: Conserved oligomeric Golgi complex subunit 4 (785 aa).

Positions 1–24 (MAEVESPLKLSGAPPPPEGVGGGH) are disordered. The residue at position 2 (A2) is an N-acetylalanine. The tract at residues 2 to 84 (AEVESPLKLS…VTLHRMGPSL (83 aa)) is interaction with SCFD1. S6 is modified (phosphoserine). Positions 85–153 (QLIEGDAKQL…TALRNEDYEQ (69 aa)) are interaction with STX5. Residues 618 to 740 (PQVQPWINTF…SQMATILNLE (123 aa)) are d domain. The interval 741–785 (RVTEILDYWGANSGPLTWRLTPAEVRQVLALRIDFRNEDIKRLRL) is e domain; essential for proper cell surface glycosylation.

It belongs to the COG4 family. In terms of assembly, monomer. Component of the conserved oligomeric Golgi (COG) complex which is composed of eight different subunits and is required for normal Golgi morphology and localization. Mediates interaction of SCFD1 with the COG complex. Interacts with STX5.

It localises to the cytoplasm. The protein resides in the cytosol. Its subcellular location is the golgi apparatus membrane. In terms of biological role, required for normal Golgi function. Plays a role in SNARE-pin assembly and Golgi-to-ER retrograde transport via its interaction with SCFD1. This chain is Conserved oligomeric Golgi complex subunit 4 (Cog4), found in Mus musculus (Mouse).